The chain runs to 58 residues: Large ribosomal subunit protein uL30 (58 aa).

It belongs to the universal ribosomal protein uL30 family. Part of the 50S ribosomal subunit.

The polypeptide is Large ribosomal subunit protein uL30 (Zymomonas mobilis subsp. mobilis (strain ATCC 31821 / ZM4 / CP4)).